A 210-amino-acid polypeptide reads, in one-letter code: Cytidylate kinase (210 aa).

Position 9–17 (9–17 (GPAAAGKGT)) interacts with ATP.

This sequence belongs to the cytidylate kinase family. Type 1 subfamily.

The protein localises to the cytoplasm. It catalyses the reaction CMP + ATP = CDP + ADP. It carries out the reaction dCMP + ATP = dCDP + ADP. This Agrobacterium fabrum (strain C58 / ATCC 33970) (Agrobacterium tumefaciens (strain C58)) protein is Cytidylate kinase.